The primary structure comprises 729 residues: MDDSTHAAEAVIATPAGDRTVRFETGRLAKQAAGSAVAYLGDTMVLSATTVSKQPKEQLDFFPLTVDVEERMYAAGRIPGSFFRREGRPSEDAILTCRLIDRPLRPSFAKGLRNEIQVVATVLALDPDTLYDVVAINAASASTTLSGLPFTGPIGATRVGFVDGEWIAFPTHAELARATFDMVVAGRVIEDGSDVAIMMVEAEATPGTVELLAHGAPAPTEEVVAAGLEAAKPAIRELCRAQSELAALAAKPAREFPVFIDYHDDVLDALSAAIGDELSAALRIPGKAERENELDRVRQLAAEKVASQFEGREKEIGAAYRALTKKLVRSRIVTESVRIDGRSTTEIRALSAEVDYIPRVHGSALFERGETQILGVTTLAMLRMEQTVDTLNPDRTKRYMHNYNFPPYSTGETGRVGSPKRREIGHGALAERALLPVLPSREEFPYAIRQVSEALGSNGSTSMGSVCASTLSLLNAGVPLKAPVAGIAMGLIHADDSYVTLTDILGAEDAYGDMDFKVAGTRDFVTALQLDTKLDGIPASVLAAALQQARGARLAILDVMAEAIGSPDEMSAHAPRVISVKIPVDKIGEVIGPKGKMINQIQADSGAEITVEDDGTIYIGAVDGPSAESARSAINAIANPQMPEVGERYLGTIVKITNFGAFVSLTPGRDGLLHVSKLKTLSGGKRVEKVEDVLTVGQKLQVEITEIDSRGKISLSPSAEAADAAAAAS.

Mg(2+) contacts are provided by D509 and D515. A KH domain is found at 575–634 (PRVISVKIPVDKIGEVIGPKGKMINQIQADSGAEITVEDDGTIYIGAVDGPSAESARSAI). The region spanning 646–718 (GERYLGTIVK…SRGKISLSPS (73 aa)) is the S1 motif domain.

It belongs to the polyribonucleotide nucleotidyltransferase family. Mg(2+) serves as cofactor.

The protein resides in the cytoplasm. It catalyses the reaction RNA(n+1) + phosphate = RNA(n) + a ribonucleoside 5'-diphosphate. In terms of biological role, involved in mRNA degradation. Catalyzes the phosphorolysis of single-stranded polyribonucleotides processively in the 3'- to 5'-direction. The polypeptide is Polyribonucleotide nucleotidyltransferase (Frankia casuarinae (strain DSM 45818 / CECT 9043 / HFP020203 / CcI3)).